We begin with the raw amino-acid sequence, 410 residues long: E3 ubiquitin-protein ligase PRT1 (410 aa).

RING-type zinc fingers lie at residues 26 to 66 and 192 to 232; these read CCVC…PICR and CSAC…QECN. A ZZ-type zinc finger spans residues 306–370; the sequence is HFGAGCDSCG…RLELARSPQV (65 aa). Residues Cys311, Cys314, Cys326, Cys329, Cys338, Cys341, His356, and His360 each coordinate Zn(2+). Residues 385-410 are disordered; it reads ISNEGMDTDEGEEGPPGSSNESSSTE. Low complexity predominate over residues 399 to 410; sequence PPGSSNESSSTE.

It is found in the cytoplasm. The catalysed reaction is S-ubiquitinyl-[E2 ubiquitin-conjugating enzyme]-L-cysteine + [acceptor protein]-L-lysine = [E2 ubiquitin-conjugating enzyme]-L-cysteine + N(6)-ubiquitinyl-[acceptor protein]-L-lysine.. It participates in protein modification; protein ubiquitination. Functionally, E3 ubiquitin-protein ligase that mediates ubiquitination and subsequent proteasomal degradation of target proteins. Functions in the N-end rule pathway of protein degradation, where it specifically recognizes and ubiquitinates proteins with a N-terminal bulky aromatic amino acid (Phe). Does not act on aliphatic hydrophobic and basic N-terminal residues (Arg or Leu) containing proteins. This chain is E3 ubiquitin-protein ligase PRT1 (PRT1), found in Arabidopsis thaliana (Mouse-ear cress).